The sequence spans 130 residues: Small ribosomal subunit protein uS8 (130 aa).

Belongs to the universal ribosomal protein uS8 family. Part of the 30S ribosomal subunit. Contacts proteins S5 and S12.

One of the primary rRNA binding proteins, it binds directly to 16S rRNA central domain where it helps coordinate assembly of the platform of the 30S subunit. The sequence is that of Small ribosomal subunit protein uS8 from Shewanella sediminis (strain HAW-EB3).